The chain runs to 238 residues: Isoamyl acetate-hydrolyzing esterase (238 aa).

The Nucleophile role is filled by Ser-12. Asp-187 functions as the Proton donor in the catalytic mechanism. His-190 serves as the catalytic Proton acceptor.

The protein belongs to the 'GDSL' lipolytic enzyme family. IAH1 subfamily. Homodimer.

The enzyme catalyses 3-methylbutyl acetate + H2O = 3-methylbutanol + acetate + H(+). In terms of biological role, plays a crucial role in the hydrolysis of isoamyl acetate in sake mash. Hydrolyzes short chain esters from acetate (C2) to hexanoate (C6), showing more specificity for shorter chain exters. No activity for decanoate (C10) esters. The chain is Isoamyl acetate-hydrolyzing esterase from Saccharomyces cerevisiae (strain ATCC 204508 / S288c) (Baker's yeast).